Here is a 115-residue protein sequence, read N- to C-terminus: Pycsar effector protein TpPycTM (115 aa).

A run of 2 helical transmembrane segments spans residues 44–64 and 74–94; these read IGNL…YATN and VWNI…VILV.

The protein resides in the cell inner membrane. Its function is as follows. Pycsar (pyrimidine cyclase system for antiphage resistance) provides immunity against bacteriophage. The pyrimidine cyclase (PycC) synthesizes cyclic nucleotides in response to infection; these serve as specific second messenger signals. The signals activate the adjacent effector, leading to bacterial cell death and abortive phage infection. A clade C Pycsar system. The effector gene of a two-gene Pycsar system. Expression of this and adjacent uridylate cyclase TpPycC (AC A0A1T4LJ54) probably confers resistance to bacteriophage. The genes are probably only expressed in response to bacteriophage infection. Probably only responds to cUMP (produced by its cognate NTP cyclase), acts by impairing membrane integrity. The chain is Pycsar effector protein TpPycTM from Treponema porcinum.